We begin with the raw amino-acid sequence, 210 residues long: Protein-L-isoaspartate O-methyltransferase (210 aa).

S54 is a catalytic residue.

It belongs to the methyltransferase superfamily. L-isoaspartyl/D-aspartyl protein methyltransferase family.

The protein resides in the cytoplasm. It carries out the reaction [protein]-L-isoaspartate + S-adenosyl-L-methionine = [protein]-L-isoaspartate alpha-methyl ester + S-adenosyl-L-homocysteine. Functionally, catalyzes the methyl esterification of L-isoaspartyl residues in peptides and proteins that result from spontaneous decomposition of normal L-aspartyl and L-asparaginyl residues. It plays a role in the repair and/or degradation of damaged proteins. This Methanothrix thermoacetophila (strain DSM 6194 / JCM 14653 / NBRC 101360 / PT) (Methanosaeta thermophila) protein is Protein-L-isoaspartate O-methyltransferase.